The primary structure comprises 118 residues: Elongin-B (118 aa).

Methionine 1 is subject to N-acetylmethionine. In terms of domain architecture, Ubiquitin-like spans 1 to 66; it reads MDVFLMIRRH…LGECGFTSQT (66 aa). Position 84 is a phosphothreonine (threonine 84). The tract at residues 92–118 is disordered; it reads PFSSPPELPDVMKPQDSGSSANEQAVQ. Positions 107 to 118 are enriched in polar residues; it reads DSGSSANEQAVQ. Phosphoserine occurs at positions 108 and 111.

Belongs to the Elongin B family. As to quaternary structure, heterotrimer of an A (ELOA, ELOA2 or ELOA3P), ELOB and ELOC subunit. The elongin BC complex interacts with EPOP; leading to recruit the elongin BC complex to Polycomb group (PcG) target genes, thereby restricting excessive activity of the PRC2/EED-EZH2 complex. Component of multiple cullin-RING E3 ubiquitin-protein ligase complexes composed of Elongin BC (ELOB and ELOC), a cullin (either CUL2 or CUL5), a catalytic subunit (either RBX1 or RNF7/RBX2), as well as a substrate adapter protein that can be either ASB2, ASB9, ASB11, KLHDC2, KLHDC3, KLHDC10, APPBP2, FEM1A, FEM1B, FEM1C, LRR1, PCMTD1, SOCS1, SOCS2, SOCS5, SPSB1, SPSB3, ELOA, VHL, WSB1 or RAB40C. As part of the Elongin BC E3 ubiquitin ligase complex; interacts with NRBP1. May also interact with DCUN1D1, DCUN1D2, DCUN1D3 and DCUN1D5. May form oligomers as a KLHDC2/KLHDC3-ELOB-ELOC complex; this interaction is autoinhibitory for the E3 ligase complex as the substrate-binding site of KLHDC2/KLHDC3 is blocked in the oligomer. In terms of assembly, (Microbial infection) Following infection by HIV-1 virus, component of a cullin-5-RING E3 ubiquitin-protein ligase complex (ECS complex) hijacked by the HIV-1 Vif protein. (Microbial infection) Substrate adapter protein can be a viral protein such as HIV Vif. As to quaternary structure, (Microbial infection) Interacts with molluscum contagiosum virus MC132. In terms of assembly, (Microbial infection) Interacts with herpes virus 8 virus protein LANA1.

It localises to the nucleus. It functions in the pathway protein modification; protein ubiquitination. SIII, also known as elongin, is a general transcription elongation factor that increases the RNA polymerase II transcription elongation past template-encoded arresting sites. Subunit A is transcriptionally active and its transcription activity is strongly enhanced by binding to the dimeric complex of the SIII regulatory subunits B and C (elongin BC complex). In embryonic stem cells, the elongin BC complex is recruited by EPOP to Polycomb group (PcG) target genes in order generate genomic region that display both active and repressive chromatin properties, an important feature of pluripotent stem cells. In terms of biological role, core component of multiple cullin-2 and cullin-5-RING E3 ubiquitin-protein ligase complexes (ECS complexes), which mediate the ubiquitination of target proteins. By binding to BC-box motifs it seems to link target recruitment subunits, like VHL and members of the SOCS box family, to Cullin/RBX1 modules that activate E2 ubiquitination enzymes. Component the von Hippel-Lindau ubiquitination complex CBC(VHL). A number of ECS complexes (containing either KLHDC2, KLHDC3, KLHDC10, APPBP2, FEM1A, FEM1B or FEM1C as substrate-recognition component) are part of the DesCEND (destruction via C-end degrons) pathway, which recognizes a C-degron located at the extreme C terminus of target proteins, leading to their ubiquitination and degradation. The ECS(ASB9) complex mediates ubiquitination and degradation of CKB. As part of a multisubunit ubiquitin ligase complex, polyubiquitinates monoubiquitinated POLR2A. ECS(LRR1) ubiquitinates MCM7 and promotes CMG replisome disassembly by VCP and chromatin extraction during S-phase. As part of the ECS(RAB40C) complex, mediates ANKRD28 ubiquitination and degradation, thereby inhibiting protein phosphatase 6 (PP6) complex activity and focal adhesion assembly during cell migration. Its function is as follows. (Microbial infection) Following infection by HIV-1 virus, component of a cullin-5-RING E3 ubiquitin-protein ligase complex (ECS complex) hijacked by the HIV-1 Vif protein, which catalyzes ubiquitination and degradation of APOBEC3F and APOBEC3G. The complex can also ubiquitinate APOBEC3H to some extent. The sequence is that of Elongin-B from Homo sapiens (Human).